The primary structure comprises 422 residues: G-protein coupled receptor 83 (422 aa).

Residues 1 to 17 form the signal peptide; that stretch reads MNVPPVLLLFLLSSVRA. Topologically, residues 18–70 are extracellular; the sequence is TEQPQVVTEHPSMDAALTGANASHFWANYTFSDWQNFVGRRRYGAESQNPTVK. A helical transmembrane segment spans residues 71–91; it reads ALLIVAYSFIIVFSLFGNVLV. The Cytoplasmic segment spans residues 92-106; it reads CHVIFKNQRMHSATS. Residues 107–127 traverse the membrane as a helical segment; the sequence is LFIVNLAVADIMITLLNTPFT. The Extracellular portion of the chain corresponds to 128 to 143; sequence LVRFVNSTWVFGKGMC. C143 and C223 are joined by a disulfide. The helical transmembrane segment at 144 to 166 threads the bilayer; it reads HVSRFAQYCSLHVSALTLTAIAV. Residues 167–184 lie on the Cytoplasmic side of the membrane; the sequence is DRHQVIMHPLKPRISITK. The chain crosses the membrane as a helical span at residues 185–205; sequence GVIYIAVIWVMATFFSLPHAI. Over 206-236 the chain is Extracellular; sequence CQKLFTFKYSEDIVRSLCLPDFPEPADLFWK. The helical transmembrane segment at 237–257 threads the bilayer; that stretch reads YLDLATFILLYLLPLFIISVA. The Cytoplasmic segment spans residues 258–292; sequence YARVAKKLWLCNTIGDVTTEQYLALRRKKKTTVKM. The helical transmembrane segment at 293-313 threads the bilayer; it reads LVLVVVLFALCWFPLNCYVLL. The Extracellular portion of the chain corresponds to 314–326; the sequence is LSSKAIHTNNALY. A helical membrane pass occupies residues 327 to 347; the sequence is FAFHWFAMSSTCYNPFIYCWL. Over 348 to 422 the chain is Cytoplasmic; that stretch reads NENFRVELKA…SSVEPTVAVS (75 aa). The segment at 401 to 422 is disordered; that stretch reads PSSQIQSGKTDLSSVEPTVAVS.

This sequence belongs to the G-protein coupled receptor 1 family. In terms of tissue distribution, expressed preferentially in brain, and its neuronal expression is relegated to limbic brain regions, particularly in forebrain.

It is found in the cell membrane. Its function is as follows. G-protein coupled receptor for PEN, a neuropeptide produced from the precursor protein, proSAAS (encoded by PCSK1N). Acts through a G(i)- and G(q)-alpha-alpha-mediated pathway in response to PEN. Plays a role in food intake and body weight regulation. May contribute to the regulation of anxiety-related behaviors. In Rattus norvegicus (Rat), this protein is G-protein coupled receptor 83.